Here is a 498-residue protein sequence, read N- to C-terminus: Cytochrome P450 6B1 (498 aa).

A heme-binding site is contributed by C443.

This sequence belongs to the cytochrome P450 family. Heme serves as cofactor. In terms of tissue distribution, midgut microsome.

It is found in the endoplasmic reticulum membrane. The protein localises to the microsome membrane. It catalyses the reaction an organic molecule + reduced [NADPH--hemoprotein reductase] + O2 = an alcohol + oxidized [NADPH--hemoprotein reductase] + H2O + H(+). Functionally, enables the insect to feed on furanocoumarin-producing plants and evolved as an adaptation for detoxification of xanthotoxin and other furanocoumarins. The sequence is that of Cytochrome P450 6B1 (CYP6B1) from Papilio polyxenes (Black swallowtail butterfly).